The following is an 882-amino-acid chain: Valine--tRNA ligase (882 aa).

Positions 52–62 match the 'HIGH' region motif; sequence PNVTGSLHMGH. Positions 539 to 543 match the 'KMSKS' region motif; the sequence is KMSKS. Lys-542 is a binding site for ATP. Residues 816-882 are a coiled coil; sequence IDVAAERRRL…RINARLAVLQ (67 aa).

It belongs to the class-I aminoacyl-tRNA synthetase family. ValS type 1 subfamily. Monomer.

It localises to the cytoplasm. It carries out the reaction tRNA(Val) + L-valine + ATP = L-valyl-tRNA(Val) + AMP + diphosphate. Its function is as follows. Catalyzes the attachment of valine to tRNA(Val). As ValRS can inadvertently accommodate and process structurally similar amino acids such as threonine, to avoid such errors, it has a 'posttransfer' editing activity that hydrolyzes mischarged Thr-tRNA(Val) in a tRNA-dependent manner. The chain is Valine--tRNA ligase from Mycolicibacterium paratuberculosis (strain ATCC BAA-968 / K-10) (Mycobacterium paratuberculosis).